Consider the following 238-residue polypeptide: Ribonuclease PH (238 aa).

Phosphate contacts are provided by residues arginine 86 and 124 to 126 (GTR).

This sequence belongs to the RNase PH family. As to quaternary structure, homohexameric ring arranged as a trimer of dimers.

It catalyses the reaction tRNA(n+1) + phosphate = tRNA(n) + a ribonucleoside 5'-diphosphate. Functionally, phosphorolytic 3'-5' exoribonuclease that plays an important role in tRNA 3'-end maturation. Removes nucleotide residues following the 3'-CCA terminus of tRNAs; can also add nucleotides to the ends of RNA molecules by using nucleoside diphosphates as substrates, but this may not be physiologically important. Probably plays a role in initiation of 16S rRNA degradation (leading to ribosome degradation) during starvation. This Aliivibrio salmonicida (strain LFI1238) (Vibrio salmonicida (strain LFI1238)) protein is Ribonuclease PH.